The chain runs to 441 residues: uncharacterized protein (441 aa).

Transmembrane regions (helical) follow at residues 21 to 41 (VVVA…MSLG), 51 to 71 (LGGG…AVAI), 94 to 114 (AAST…VTMS), 118 to 138 (VIPV…GVFA), 150 to 170 (VLTF…GGIF), 195 to 215 (AMLL…FVSY), 239 to 259 (QHIL…LYTG), 260 to 280 (SMII…VIAW), 291 to 311 (VHMM…AAVM), 334 to 354 (LAAL…GSSF), 363 to 383 (IYVP…ALVG), and 419 to 439 (VVPT…IAAM).

The protein resides in the cell membrane. This is an uncharacterized protein from Vibrio parahaemolyticus serotype O3:K6 (strain RIMD 2210633).